Reading from the N-terminus, the 403-residue chain is Ribosomal RNA large subunit methyltransferase I (403 aa).

The 80-residue stretch at 9–88 folds into the PUA domain; the sequence is YPRLVLSKGR…ESIDIAFFTR (80 aa).

Belongs to the methyltransferase superfamily. RlmI family.

It localises to the cytoplasm. It catalyses the reaction cytidine(1962) in 23S rRNA + S-adenosyl-L-methionine = 5-methylcytidine(1962) in 23S rRNA + S-adenosyl-L-homocysteine + H(+). In terms of biological role, specifically methylates the cytosine at position 1962 (m5C1962) of 23S rRNA. The polypeptide is Ribosomal RNA large subunit methyltransferase I (Salmonella choleraesuis (strain SC-B67)).